Consider the following 302-residue polypeptide: Ectoine dioxygenase (302 aa).

Residue Gln-128 participates in L-ectoine binding. 2-oxoglutarate is bound at residue Lys-134. 3 residues coordinate Fe cation: His-145, Asp-147, and His-246.

It belongs to the PhyH family. EctD subfamily. Homodimer. Requires Fe(2+) as cofactor.

The catalysed reaction is L-ectoine + 2-oxoglutarate + O2 = 5-hydroxyectoine + succinate + CO2. Functionally, involved in the biosynthesis of 5-hydroxyectoine, called compatible solute, which helps organisms to survive extreme osmotic stress by acting as a highly soluble organic osmolyte. Catalyzes the 2-oxoglutarate-dependent selective hydroxylation of L-ectoine to yield (4S,5S)-5-hydroxyectoine. The sequence is that of Ectoine dioxygenase from Stutzerimonas stutzeri (strain A1501) (Pseudomonas stutzeri).